The following is a 1481-amino-acid chain: Cystic fibrosis transmembrane conductance regulator (1481 aa).

Residues 1 to 77 (MQKSPLEKAG…KLINALRRCF (77 aa)) are Cytoplasmic-facing. Residues 78–98 (FWRFMFYGILLYLGEVTKAVQ) form a helical membrane-spanning segment. Positions 81-365 (FMFYGILLYL…WAVQTWYDSL (285 aa)) constitute an ABC transmembrane type-1 1 domain. Residues 99-122 (PLLLGRIIASYDPDNKVERSIAIY) are Extracellular-facing. The helical transmembrane segment at 123–146 (LGIGLCLLFVVRTLLLHPAIFGLH) threads the bilayer. The Cytoplasmic portion of the chain corresponds to 147-195 (HIGMQMRIAMFSLIYKKTLKLSSRVLDKISIGQLISLLSNNLNKFDEGL). A helical membrane pass occupies residues 196 to 216 (ALAHFVWISPLQVTLLMGLLW). Over 217–222 (ELLQAS) the chain is Extracellular. The chain crosses the membrane as a helical span at residues 223–243 (AFCGLAFLIVLALVQAGLGRM). Topologically, residues 244-298 (MMKYRDQRAGKINERLVITSEMIENIQSVKAYCWEEAMEKMIENLRQTELKLTRK) are cytoplasmic. A helical transmembrane segment spans residues 299–319 (AAYVRYFNSSAFFFSGFFVVF). Over 320-339 (LSVLPYALTKGIILRKIFTT) the chain is Extracellular. A helical membrane pass occupies residues 340-358 (ISFCIVLRMAVTRQFPWAV). Topologically, residues 359–858 (QTWYDSLGAI…YLRYITVHRS (500 aa)) are cytoplasmic. Residues W401, S434, 458–465 (GSTGAGKT), and Q493 each bind ATP. In terms of domain architecture, ABC transporter 1 spans 423 to 646 (NGDNNLFFSN…RPDFSSKLMG (224 aa)). Residue C524 is the site of S-palmitoyl cysteine attachment. A phosphoserine mark is found at S549 and S660. The segment at 654–831 (SAERRNSILT…EEINEEDLKE (178 aa)) is disordered R region. The residue at position 670 (S670) is a Phosphoserine; by PKA. Phosphoserine is present on S686. K688 is covalently cross-linked (Glycyl lysine isopeptide (Lys-Gly) (interchain with G-Cter in ubiquitin)). A phosphoserine mark is found at S700 and S712. Phosphothreonine is present on T717. Phosphoserine is present on residues S737, S768, S790, S795, and S813. Residues 859–879 (LIFVLIWCIVIFLAEVAASLV) form a helical membrane-spanning segment. One can recognise an ABC transmembrane type-1 2 domain in the interval 859–1155 (LIFVLIWCIV…AVNSSIDVDS (297 aa)). Residues 880–918 (VLWLFGNTAPQDKENSTKSGNSSYAVIITNTSSYYFFYI) are Extracellular-facing. 3 N-linked (GlcNAc...) asparagine glycosylation sites follow: N894, N900, and N909. A discontinuously helical membrane pass occupies residues 919-939 (YVGVADTLLALGLFRGLPLVH). Topologically, residues 940-990 (TLITVSKILHHKMLHSVLQAPMSTLNTLKAGGILNRFSKDIAILDDLLPLT) are cytoplasmic. Residues 991 to 1011 (IFDFIQLLLIVVGAIAVVSVL) traverse the membrane as a helical segment. Topologically, residues 1012-1013 (QP) are extracellular. Residues 1014-1034 (YIFLATVPVIAAFILLRAYFL) traverse the membrane as a helical segment. The Cytoplasmic portion of the chain corresponds to 1035-1095 (HTSQQLKQLE…TANWFLYLST (61 aa)). The chain crosses the membrane as a helical span at residues 1096-1116 (LRWFQMRIEMIFVLFFIAVAF). Residues 1117 to 1130 (ISILTTGEGEGRVG) are Extracellular-facing. The helical transmembrane segment at 1131–1151 (IILTLAMNIMSTLQWAVNSSI) threads the bilayer. The Cytoplasmic segment spans residues 1152 to 1481 (DVDSLMRSVS…AEEEVQGTRL (330 aa)). Positions 1199–1444 (VKKDDVWPSG…KSLFRQAISS (246 aa)) constitute an ABC transporter 2 domain. ATP contacts are provided by residues Y1220 and 1245 to 1252 (GRTGSGKS). An interaction with GORASP2 region spans residues 1387-1481 (RTLKQAFADC…AEEEVQGTRL (95 aa)). C1396 is lipidated: S-palmitoyl cysteine. Phosphoserine occurs at positions 1445 and 1457. The disordered stretch occupies residues 1449–1481 (KLFPHRNSSKHKSRPQITALKEEAEEEVQGTRL). Positions 1450–1462 (LFPHRNSSKHKSR) are enriched in basic residues. The segment covering 1471–1481 (EAEEEVQGTRL) has biased composition (acidic residues). The PDZ-binding motif lies at 1479–1481 (TRL).

The protein belongs to the ABC transporter superfamily. ABCC family. CFTR transporter (TC 3.A.1.202) subfamily. As to quaternary structure, monomer; does not require oligomerization for channel activity. May form oligomers in the membrane. Interacts with SLC26A3, SLC26A6 and NHERF1. Interacts with SHANK2. Interacts with MYO6. Interacts (via C-terminus) with GOPC (via PDZ domain); this promotes CFTR internalization and thereby decreases channel activity. Interacts with SLC4A7 through NHERF1. Found in a complex with MYO5B and RAB11A. Interacts with ANO1. Interacts with SLC26A8. Interacts with AHCYL1; the interaction increases CFTR activity. Interacts with CSE1L. The core-glycosylated form interacts with GORASP2 (via PDZ GRASP-type 1 domain) in respone to ER stress. Interacts with MARCHF2; the interaction leads to CFTR ubiqtuitination and degradation. Interacts with ADGRG2. In terms of processing, N-glycosylated. Phosphorylated; cAMP treatment promotes phosphorylation and activates the channel. Dephosphorylation decreases the ATPase activity (in vitro). Phosphorylation at PKA sites activates the channel. Phosphorylation at PKC sites enhances the response to phosphorylation by PKA. Phosphorylated by AMPK; this inhibits channel activity. Post-translationally, ubiquitinated, leading to its degradation in the lysosome. Deubiquitination by USP10 in early endosomes enhances its endocytic recycling to the cell membrane. Ubiquitinated by RNF185 during ER stress. Ubiquitinated by MARCHF2. Isoform 1 is expressed in the pancreas. Isoform 2 is specifically expressed in the ventricle.

The protein resides in the apical cell membrane. It localises to the early endosome membrane. Its subcellular location is the cell membrane. It is found in the recycling endosome membrane. The protein localises to the endoplasmic reticulum membrane. The protein resides in the nucleus. The catalysed reaction is ATP + H2O + closed Cl(-) channel = ADP + phosphate + open Cl(-) channel.. It catalyses the reaction chloride(in) = chloride(out). It carries out the reaction hydrogencarbonate(in) = hydrogencarbonate(out). The enzyme catalyses ATP + H2O = ADP + phosphate + H(+). Functionally, epithelial ion channel that plays an important role in the regulation of epithelial ion and water transport and fluid homeostasis. Mediates the transport of chloride ions across the cell membrane. Possesses an intrinsic ATPase activity and utilizes ATP to gate its channel; the passive flow of anions through the channel is gated by cycles of ATP binding and hydrolysis by the ATP-binding domains. The ion channel is also permeable to HCO(3)(-); selectivity depends on the extracellular chloride concentration. Exerts its function also by modulating the activity of other ion channels and transporters. Contributes to the regulation of the pH and the ion content of the epithelial fluid layer. Modulates the activity of the epithelial sodium channel (ENaC) complex, in part by regulating the cell surface expression of the ENaC complex. May regulate bicarbonate secretion and salvage in epithelial cells by regulating the transporter SLC4A7. Can inhibit the chloride channel activity of ANO1. Plays a role in the chloride and bicarbonate homeostasis during sperm epididymal maturation and capacitation. The chain is Cystic fibrosis transmembrane conductance regulator from Oryctolagus cuniculus (Rabbit).